Consider the following 688-residue polypeptide: Potassium-transporting ATPase ATP-binding subunit (688 aa).

The next 4 helical transmembrane spans lie at 34–54 (PVMFVVYLGSWLTTLIWLAIL), 62–82 (AMFTGSIALWLWFTVLFANMA), 219–239 (VALTILLVALTIVFLLATATL), and 260–280 (VLVALLVCLIPTTIGGLLSAI). Asp-313 (4-aspartylphosphate intermediate) is an active-site residue. Residues Asp-350, Glu-354, 383 to 390 (FSAQTRMS), and Lys-401 contribute to the ATP site. Mg(2+) contacts are provided by Asp-524 and Asp-528. Transmembrane regions (helical) follow at residues 594–614 (FAIIPAAFAATYPQLNALNIM), 622–642 (AILSAVIFNALVIVFLIPLAL), and 662–682 (IYGLGGLLVPFVGIKLIDLLL).

It belongs to the cation transport ATPase (P-type) (TC 3.A.3) family. Type IA subfamily. As to quaternary structure, the system is composed of three essential subunits: KdpA, KdpB and KdpC.

The protein localises to the cell inner membrane. It carries out the reaction K(+)(out) + ATP + H2O = K(+)(in) + ADP + phosphate + H(+). In terms of biological role, part of the high-affinity ATP-driven potassium transport (or Kdp) system, which catalyzes the hydrolysis of ATP coupled with the electrogenic transport of potassium into the cytoplasm. This subunit is responsible for energy coupling to the transport system and for the release of the potassium ions to the cytoplasm. The sequence is that of Potassium-transporting ATPase ATP-binding subunit from Yersinia pseudotuberculosis serotype O:1b (strain IP 31758).